The chain runs to 432 residues: Tol-Pal system protein TolB (432 aa).

An N-terminal signal peptide occupies residues 1 to 21 (MSTLIRIALFALALMAGAAQA).

The protein belongs to the TolB family. In terms of assembly, the Tol-Pal system is composed of five core proteins: the inner membrane proteins TolA, TolQ and TolR, the periplasmic protein TolB and the outer membrane protein Pal. They form a network linking the inner and outer membranes and the peptidoglycan layer.

The protein resides in the periplasm. Its function is as follows. Part of the Tol-Pal system, which plays a role in outer membrane invagination during cell division and is important for maintaining outer membrane integrity. The protein is Tol-Pal system protein TolB of Pseudomonas aeruginosa (strain ATCC 15692 / DSM 22644 / CIP 104116 / JCM 14847 / LMG 12228 / 1C / PRS 101 / PAO1).